The sequence spans 102 residues: Small ribosomal subunit protein uS10 (102 aa).

Belongs to the universal ribosomal protein uS10 family. As to quaternary structure, part of the 30S ribosomal subunit.

Functionally, involved in the binding of tRNA to the ribosomes. This is Small ribosomal subunit protein uS10 from Cereibacter sphaeroides (strain ATCC 17029 / ATH 2.4.9) (Rhodobacter sphaeroides).